A 24-amino-acid polypeptide reads, in one-letter code: Erythromycin resistance leader peptide (24 aa).

Low complexity predominate over residues 1–14; the sequence is MSMGIAARPPRAAL. A disordered region spans residues 1-24; sequence MSMGIAARPPRAALLPPPSVPRSR. A compositionally biased stretch (pro residues) spans 15-24; sequence LPPPSVPRSR.

In terms of biological role, this peptide is involved in the control mechanism of the synthesis of the macrolide-lincosamide-streptogramin B resistance protein. This chain is Erythromycin resistance leader peptide, found in Streptomyces fradiae (Streptomyces roseoflavus).